Reading from the N-terminus, the 1627-residue chain is Formin-like protein 5 (1627 aa).

The Phosphatase tensin-type domain occupies 5 to 194; that stretch reads RKFFLKKTPD…HYITRQGSGP (190 aa). Cysteine 127 acts as the Phosphocysteine intermediate in catalysis. The C2 tensin-type domain occupies 200–337; the sequence is SRPLILDSIV…FRAEVVFSDP (138 aa). 5 disordered regions span residues 370-413, 680-787, 801-1181, 1241-1261, and 1571-1627; these read EAEE…LEKH, TKRE…YDSS, KFNV…RGVV, AAVP…SLGS, and KQAE…KDVG. Composition is skewed to basic and acidic residues over residues 402–413, 681–691, 700–717, and 726–742; these read VSREDSGSLEKH, KREESGGRRDV, IEAR…RQIP, and MPVD…EKLG. Composition is skewed to pro residues over residues 824 to 835, 852 to 870, 877 to 886, 897 to 908, 931 to 965, and 974 to 1168; these read APPPPPPPPPPY, QPPP…PPPA, IPPPPPPPPL, VPPPPPPPPPPR, ISPP…PPSA, and APPP…PPGG. Residues 1188–1588 form the FH2 domain; it reads FGAAAARKST…RAEKEAEAEK (401 aa). Basic and acidic residues-rich tracts occupy residues 1248–1261 and 1571–1590; these read DSSK…SLGS and KQAE…EKSK. The span at 1600–1611 shows a compositional bias: polar residues; the sequence is KPSNPSRQVKQT. Basic and acidic residues predominate over residues 1612-1627; sequence PDTKTRAASRRGKDVG.

It belongs to the formin-like family. Class-II subfamily.

The chain is Formin-like protein 5 (FH5) from Oryza sativa subsp. japonica (Rice).